A 262-amino-acid polypeptide reads, in one-letter code: uncharacterized protein (262 aa).

This sequence belongs to the BtpA family.

This is an uncharacterized protein from Pyrococcus furiosus (strain ATCC 43587 / DSM 3638 / JCM 8422 / Vc1).